The chain runs to 557 residues: Membrane protein insertase YidC (557 aa).

5 helical membrane-spanning segments follow: residues 6–26, 219–239, 367–387, 437–457, and 514–534; these read TILW…WQVH, IGPF…IYTD, IVGN…LAFF, LGGC…YWVL, and MPIV…LYWV.

Belongs to the OXA1/ALB3/YidC family. Type 1 subfamily. Interacts with the Sec translocase complex via SecD. Specifically interacts with transmembrane segments of nascent integral membrane proteins during membrane integration.

It localises to the cell inner membrane. Functionally, required for the insertion and/or proper folding and/or complex formation of integral membrane proteins into the membrane. Involved in integration of membrane proteins that insert both dependently and independently of the Sec translocase complex, as well as at least some lipoproteins. Aids folding of multispanning membrane proteins. This is Membrane protein insertase YidC from Polynucleobacter asymbioticus (strain DSM 18221 / CIP 109841 / QLW-P1DMWA-1) (Polynucleobacter necessarius subsp. asymbioticus).